The chain runs to 75 residues: ATP synthase subunit 9, mitochondrial (75 aa).

The next 2 membrane-spanning stretches (helical) occupy residues 10-30 and 55-75; these read LVLG…GILF and FALV…VYFI.

It belongs to the ATPase C chain family. F-type ATPases have 2 components, CF(1) - the catalytic core - and CF(0) - the membrane proton channel. CF(1) has five subunits: alpha(3), beta(3), gamma(1), delta(1), epsilon(1). CF(0) has three main subunits: a, b and c.

It is found in the mitochondrion membrane. Mitochondrial membrane ATP synthase (F(1)F(0) ATP synthase or Complex V) produces ATP from ADP in the presence of a proton gradient across the membrane which is generated by electron transport complexes of the respiratory chain. F-type ATPases consist of two structural domains, F(1) - containing the extramembraneous catalytic core and F(0) - containing the membrane proton channel, linked together by a central stalk and a peripheral stalk. During catalysis, ATP synthesis in the catalytic domain of F(1) is coupled via a rotary mechanism of the central stalk subunits to proton translocation. Part of the complex F(0) domain. A homomeric c-ring of probably 10 subunits is part of the complex rotary element. This Paramecium tetraurelia protein is ATP synthase subunit 9, mitochondrial (ATP9).